A 231-amino-acid chain; its full sequence is Large ribosomal subunit protein uL1 (231 aa).

The protein belongs to the universal ribosomal protein uL1 family. As to quaternary structure, part of the 50S ribosomal subunit.

In terms of biological role, binds directly to 23S rRNA. The L1 stalk is quite mobile in the ribosome, and is involved in E site tRNA release. Functionally, protein L1 is also a translational repressor protein, it controls the translation of the L11 operon by binding to its mRNA. This chain is Large ribosomal subunit protein uL1, found in Gluconacetobacter diazotrophicus (strain ATCC 49037 / DSM 5601 / CCUG 37298 / CIP 103539 / LMG 7603 / PAl5).